Here is a 134-residue protein sequence, read N- to C-terminus: Histone H2B (134 aa).

The segment covering 1–10 (MSDKASTPKK) has biased composition (polar residues). Disordered regions lie at residues 1 to 29 (MSDK…EAKK) and 113 to 134 (VSEG…SKSR). Residues 12–29 (ATKDATKPKKVGDEEAKK) are compositionally biased toward basic and acidic residues. Polar residues predominate over residues 125 to 134 (GQPTSGSKSR).

The protein belongs to the histone H2B family. In terms of assembly, the nucleosome is a histone octamer containing two molecules each of H2A, H2B, H3 and H4 assembled in one H3-H4 heterotetramer and two H2A-H2B heterodimers. The octamer wraps approximately 147 bp of DNA.

The protein localises to the nucleus. It is found in the chromosome. Core component of nucleosome. Nucleosomes wrap and compact DNA into chromatin, limiting DNA accessibility to the cellular machineries which require DNA as a template. Histones thereby play a central role in transcription regulation, DNA repair, DNA replication and chromosomal stability. DNA accessibility is regulated via a complex set of post-translational modifications of histones, also called histone code, and nucleosome remodeling. The sequence is that of Histone H2B from Entamoeba invadens.